The sequence spans 324 residues: Short chain dehydrogenase/reductase dmxR8 (324 aa).

L33, K58, D83, and N110 together coordinate NADP(+). The active-site Proton donor is the S163. Positions 200 and 204 each coordinate NADP(+). Y200 (proton acceptor) is an active-site residue. Catalysis depends on K204, which acts as the Lowers pKa of active site Tyr.

This sequence belongs to the short-chain dehydrogenases/reductases (SDR) family.

Its pathway is secondary metabolite biosynthesis. Functionally, short chain dehydrogenase; part of the gene cluster that mediates the biosynthesis of the dimeric xanthones cryptosporioptides. The pathway begins with the synthesis of atrochrysone thioester by the polyketide synthase dmx-nrPKS. The atrochrysone carboxyl ACP thioesterase dmxR1 then breaks the thioester bond and releases the atrochrysone carboxylic acid from dmx-nrPKS. Atrochrysone carboxylic acid is decarboxylated by the decarboxylase dmxR15, and oxidized by the anthrone oxygenase dmxR16 to yield emodin. Emodin is then reduced to emodin hydroquinone by the oxidoreductase dmxR7. A-ring reduction by the short chain dehydrogenase dmxR18, dehydration by the scytalone dehydratase-like protein dmxR17 and probable spontaneous re-oxidation, results in overall deoxygenation to chrysophanol. Baeyer-Villiger oxidation by the Baeyer-Villiger monooxygenase (BVMO) dmxR6 then yields monodictylactone in equilibrium with monodictyphenone. In the case of the cryptosporioptides biosynthesis, monodictylactone is reduced at C-12 to an alcohol (by the short chain dehydrogenases dmxR12 or dmxR8) and hydroxylated at C-5 by dmxR9, yielding the electron-rich aromatic which could eliminate H(2)O to form the ortho-quinonemethide, followed by tautomerisation to paraquinone and complete the formal reduction to produce the 10-methylgroup. Conjugate addition of C-4a-OH to the resulting paraquinone by the monooxygenase dmxR10 then gives cyclohexadienone, which is then reduced at C-5 by the short chain dehydrogenase dmxR3 to give the dihydroxanthone. The 6,7-epoxide in the cryptosporioptides could be introduced by the cytochrome P450 monooxygenase dmxL3. The highly reducing PKS dmxL2 manufactures butyrate, which is further carboxylated by dmxL1 to form ethylmalonate. It is not yet clear whether the carboxylation occurs while the butyrate is attached to the ACP of dmxL2, but this unusual fungal metabolite could then be esterified to O-5 by the O-acetyltransferase dmxR13. Finally, dimerization performed by dmxR5 gives the observed dimers cryptosporioptides A, B and C as the final products of the pathway. The polypeptide is Short chain dehydrogenase/reductase dmxR8 (Cryptosporiopsis sp. (strain 8999)).